Reading from the N-terminus, the 158-residue chain is Large ribosomal subunit protein bL19 (158 aa).

A disordered region spans residues 1 to 35 (MTADSKDTSMSEDNTETATAIENSSAMVTDVTSKS). Positions 16 to 35 (ETATAIENSSAMVTDVTSKS) are enriched in polar residues.

It belongs to the bacterial ribosomal protein bL19 family.

This protein is located at the 30S-50S ribosomal subunit interface and may play a role in the structure and function of the aminoacyl-tRNA binding site. The polypeptide is Large ribosomal subunit protein bL19 (Prochlorococcus marinus (strain MIT 9313)).